The sequence spans 500 residues: L-arabinose isomerase (500 aa).

4 residues coordinate Mn(2+): glutamate 306, glutamate 333, histidine 350, and histidine 450.

This sequence belongs to the arabinose isomerase family. As to quaternary structure, homohexamer. The cofactor is Mn(2+).

It carries out the reaction beta-L-arabinopyranose = L-ribulose. The protein operates within carbohydrate degradation; L-arabinose degradation via L-ribulose; D-xylulose 5-phosphate from L-arabinose (bacterial route): step 1/3. Catalyzes the conversion of L-arabinose to L-ribulose. The polypeptide is L-arabinose isomerase (Yersinia pseudotuberculosis serotype I (strain IP32953)).